The chain runs to 748 residues: Antigen peptide transporter 1 (748 aa).

The Cytoplasmic segment spans residues 1 to 15 (MASSRCPAPRGCRCL). A helical membrane pass occupies residues 16-36 (PGASLAWLGTVLLLLADWVLL). Residues 37-53 (RTALPRIFSLLVPTALP) lie on the Lumenal side of the membrane. A helical membrane pass occupies residues 54 to 76 (LLRVWAVGLSRWAVLWLGACGVL). The Cytoplasmic segment spans residues 77-92 (RATVGSKSENAGAQGW). The helical transmembrane segment at 93–113 (LAALKPLAAALGLALPGLALF) threads the bilayer. Over 114–133 (RELISWGAPGSADSTRLLHW) the chain is Lumenal. A helical membrane pass occupies residues 134-154 (GSHPTAFVVSYAAALPAAALW). The Cytoplasmic portion of the chain corresponds to 155 to 186 (HKLGSLWVPGGQGGSGNPVRRLLGCLGSETRR). A helical membrane pass occupies residues 187–207 (LSLFLVLVVLSSLGEMAIPFF). Residues 187–470 (LSLFLVLVVL…LLSIYPRVQK (284 aa)) enclose the ABC transmembrane type-1 domain. The Lumenal segment spans residues 208-227 (TGRLTDWILQDGSADTFTRN). A helical membrane pass occupies residues 228–248 (LTLMSILTIASAVLEFVGDGI). Residues 249–298 (YNNTMGHVHSHLQGEVFGAVLRQETEFFQQNQTGNIMSRVTEDTSTLSDS) lie on the Cytoplasmic side of the membrane. A helical transmembrane segment spans residues 299–319 (LSENLSLFLWYLVRGLCLLGI). Over 320–328 (MLWGSVSLT) the chain is Lumenal. A helical transmembrane segment spans residues 329–349 (MVTLITLPLLFLLPKKVGKWY). The Cytoplasmic segment spans residues 350–418 (QLLEVQVRES…AVNSWTTSIS (69 aa)). A part of the peptide-binding site region spans residues 375 to 420 (PTVRSFANEEGEAQKFREKLQEIKTLNQKEAVAYAVNSWTTSISGM). Residues 419–439 (GMLLKVGILYIGGQLVTSGAV) form a helical membrane-spanning segment. At 440-443 (SSGN) the chain is on the lumenal side. A helical membrane pass occupies residues 444 to 464 (LVTFVLYQMQFTQAVEVLLSI). Positions 453 to 487 (QFTQAVEVLLSIYPRVQKAVGSSEKIFEYLDRTPR) are part of the peptide-binding site. Topologically, residues 465–748 (YPRVQKAVGS…MVQAPADAPE (284 aa)) are cytoplasmic. The ABC transporter domain occupies 503–742 (VQFQDVSFAY…KGCYWAMVQA (240 aa)). ATP contacts are provided by residues 538–546 (GPNGSGKST), 641–647 (SQLSGGQ), and glutamine 701. Serine 545 provides a ligand contact to Mg(2+).

This sequence belongs to the ABC transporter superfamily. ABCB family. MHC peptide exporter (TC 3.A.1.209) subfamily. As to quaternary structure, heterodimer of TAP1 and TAP2 (TAP1-TAP2). A component of the peptide loading complex (PLC), interacts via TAPBP with MHCI heterodimer; this interaction mediates peptide-MHCI assembly. Recruits TAPBP in a 1:1 stoichiometry. Interacts with classical MHCI such as HLA-A*02-B2M; this interaction is obligatory for the loading of peptide epitopes. Interacts with non-classical MHCI molecules including HLA-E-B2M and HLA-F-B2M as well as PLC component CALR before the peptide loading. Interacts with PSMB5 and PSMB8. (Microbial infection) Interacts with Epstein-Barr virus BNLF2a. In terms of assembly, (Microbial infection) Interacts with herpes simplex virus US12/ICP47. As to quaternary structure, (Microbial infection) Interacts with adenovirus E3-19K glycoprotein, which binds TAP1-TAP2 and acts as a TAPBP inhibitor, preventing TAP1-TAP2 association with MHCI. Requires Mg(2+) as cofactor. In terms of tissue distribution, highly expressed in professional APCs monocytes and dendritic cells as well as in lymphocyte subsets T cells, B cells and NK cells.

The protein resides in the endoplasmic reticulum membrane. It catalyses the reaction a peptide antigen(in) + ATP + H2O = a peptide antigen(out) + ADP + phosphate + H(+). With respect to regulation, inhibited at high ER lumenal peptide concentrations. (Microbial infection) Inhibited by herpes simplex virus US12/ICP47 protein, which blocks the peptide-binding site of TAP1-TAP2. Its activity is regulated as follows. (Microbial infection) Inhibited by human cytomegalovirus US6 glycoprotein, which binds to the lumenal side of TAP1-TAP2 complex and inhibits peptide translocation by specifically blocking ATP-binding and preventing TAP1-TAP2 conformational rearrangement induced by peptide binding. Its function is as follows. ABC transporter associated with antigen processing. In complex with TAP2 mediates unidirectional translocation of peptide antigens from cytosol to endoplasmic reticulum (ER) for loading onto MHC class I (MHCI) molecules. Uses the chemical energy of ATP to export peptides against the concentration gradient. During the transport cycle alternates between 'inward-facing' state with peptide binding site facing the cytosol to 'outward-facing' state with peptide binding site facing the ER lumen. Peptide antigen binding to ATP-loaded TAP1-TAP2 induces a switch to hydrolysis-competent 'outward-facing' conformation ready for peptide loading onto nascent MHCI molecules. Subsequently ATP hydrolysis resets the transporter to the 'inward facing' state for a new cycle. Typically transports intracellular peptide antigens of 8 to 13 amino acids that arise from cytosolic proteolysis via IFNG-induced immunoproteasome. Binds peptides with free N- and C-termini, the first three and the C-terminal residues being critical. Preferentially selects peptides having a highly hydrophobic residue at position 3 and hydrophobic or charged residues at the C-terminal anchor. Proline at position 2 has the most destabilizing effect. As a component of the peptide loading complex (PLC), acts as a molecular scaffold essential for peptide-MHCI assembly and antigen presentation. The sequence is that of Antigen peptide transporter 1 from Homo sapiens (Human).